We begin with the raw amino-acid sequence, 339 residues long: Glycerol-3-phosphate dehydrogenase [NAD(P)+] (339 aa).

Positions 13, 14, and 108 each coordinate NADPH. 3 residues coordinate sn-glycerol 3-phosphate: K108, G139, and S141. A143 contributes to the NADPH binding site. Sn-glycerol 3-phosphate is bound by residues K194, D247, S257, R258, and N259. The active-site Proton acceptor is K194. R258 contributes to the NADPH binding site. 2 residues coordinate NADPH: V282 and E284.

The protein belongs to the NAD-dependent glycerol-3-phosphate dehydrogenase family.

Its subcellular location is the cytoplasm. The catalysed reaction is sn-glycerol 3-phosphate + NAD(+) = dihydroxyacetone phosphate + NADH + H(+). The enzyme catalyses sn-glycerol 3-phosphate + NADP(+) = dihydroxyacetone phosphate + NADPH + H(+). It functions in the pathway membrane lipid metabolism; glycerophospholipid metabolism. In terms of biological role, catalyzes the reduction of the glycolytic intermediate dihydroxyacetone phosphate (DHAP) to sn-glycerol 3-phosphate (G3P), the key precursor for phospholipid synthesis. The sequence is that of Glycerol-3-phosphate dehydrogenase [NAD(P)+] from Streptococcus equi subsp. equi (strain 4047).